Consider the following 252-residue polypeptide: Cytochrome c oxidase subunit 2 (252 aa).

Residues 1–39 (MFLIMLKGHILMDAPTPWGIFFQDSASPQMEGIMELHNN) lie on the Mitochondrial intermembrane side of the membrane. A helical membrane pass occupies residues 40 to 59 (IMFYLAIILFTVTWMMITII). At 60–81 (RNFVAKKSPIAHKYMNHGTLIE) the chain is on the mitochondrial matrix side. A helical transmembrane segment spans residues 82–105 (LIWTITPAFILILIAFPSFKLLYL). The Mitochondrial intermembrane segment spans residues 106 to 252 (MDEVMDPSLV…LLWLRDQMEG (147 aa)). The Cu cation site is built by His-184, Cys-219, Glu-221, Cys-223, His-227, and Met-230. A Mg(2+)-binding site is contributed by Glu-221.

This sequence belongs to the cytochrome c oxidase subunit 2 family. In terms of assembly, component of the cytochrome c oxidase (complex IV, CIV), a multisubunit enzyme composed of a catalytic core of 3 subunits and several supernumerary subunits. The complex exists as a monomer or a dimer and forms supercomplexes (SCs) in the inner mitochondrial membrane with ubiquinol-cytochrome c oxidoreductase (cytochrome b-c1 complex, complex III, CIII). Cu cation is required as a cofactor.

The protein resides in the mitochondrion inner membrane. It carries out the reaction 4 Fe(II)-[cytochrome c] + O2 + 8 H(+)(in) = 4 Fe(III)-[cytochrome c] + 2 H2O + 4 H(+)(out). Component of the cytochrome c oxidase, the last enzyme in the mitochondrial electron transport chain which drives oxidative phosphorylation. The respiratory chain contains 3 multisubunit complexes succinate dehydrogenase (complex II, CII), ubiquinol-cytochrome c oxidoreductase (cytochrome b-c1 complex, complex III, CIII) and cytochrome c oxidase (complex IV, CIV), that cooperate to transfer electrons derived from NADH and succinate to molecular oxygen, creating an electrochemical gradient over the inner membrane that drives transmembrane transport and the ATP synthase. Cytochrome c oxidase is the component of the respiratory chain that catalyzes the reduction of oxygen to water. Electrons originating from reduced cytochrome c in the intermembrane space (IMS) are transferred via the dinuclear copper A center (CU(A)) of subunit 2 and heme A of subunit 1 to the active site in subunit 1, a binuclear center (BNC) formed by heme A3 and copper B (CU(B)). The BNC reduces molecular oxygen to 2 water molecules using 4 electrons from cytochrome c in the IMS and 4 protons from the mitochondrial matrix. The sequence is that of Cytochrome c oxidase subunit 2 (cox2) from Emericella nidulans (Aspergillus nidulans).